Reading from the N-terminus, the 429-residue chain is Adenylosuccinate synthetase (429 aa).

GTP contacts are provided by residues 12 to 18 and 40 to 42; these read GDEGKGK and GHT. Aspartate 13 acts as the Proton acceptor in catalysis. Residues aspartate 13 and glycine 40 each coordinate Mg(2+). IMP contacts are provided by residues 13–16, 38–41, threonine 128, arginine 142, glutamine 223, threonine 238, and arginine 302; these read DEGK and NAGH. Histidine 41 serves as the catalytic Proton donor. 298 to 304 contributes to the substrate binding site; that stretch reads VNTGRPR. Residues arginine 304, 330–332, and 412–414 each bind GTP; these read KLD and GVG.

This sequence belongs to the adenylosuccinate synthetase family. Homodimer. Mg(2+) serves as cofactor.

The protein localises to the cytoplasm. The enzyme catalyses IMP + L-aspartate + GTP = N(6)-(1,2-dicarboxyethyl)-AMP + GDP + phosphate + 2 H(+). It functions in the pathway purine metabolism; AMP biosynthesis via de novo pathway; AMP from IMP: step 1/2. Its function is as follows. Plays an important role in the de novo pathway of purine nucleotide biosynthesis. Catalyzes the first committed step in the biosynthesis of AMP from IMP. This is Adenylosuccinate synthetase from Arthrobacter sp. (strain FB24).